The following is a 401-amino-acid chain: MQVSIACTEHNLKSRNGEERLISKQNAAAPNVVNAARAKFRTVAIIARSLGTFTPQHHISLKESTAKQTGMKYRNLGKSGLRVSCLGLGTWVTFGGQISDEVAEQLMTIAYESGVNLFDTAEVYAAGKAEVILGNILKKKGWRRSSLVITTKLYWGGKAETERGLSRKHIIEGLRASLQRLQLEYVDVVFANRPDNNTPMEEIVRAMTHVINQGMAMYWGTSRWSAMEIMEAYSVARQFNLIPPVCEQAEYHLFQREKVEVQLPELYHKIGVGAMTWSPLACGIISGKYGNGVPESSRAALKCYQWLKEKIISEEGRKQQTKLKDLSPIAERLGCTLPQLAVAWCLRNEGVSSVLLGSSNPEQLIENLGAIQVLPKMTSHIVNEIDNILGNKPYSKKDYRS.

Positions 90, 91, 97, and 119 each coordinate NADP(+). Catalysis depends on Tyr124, which acts as the Proton donor/acceptor. Asn192, Ser222, Arg223, Gln248, Trp277, Ser278, Pro279, Leu280, Ala281, Cys282, Lys288, Arg298, Gly357, Ser359, Gln363, Glu366, and Asn367 together coordinate NADP(+).

This sequence belongs to the shaker potassium channel beta subunit family. In terms of assembly, homotetramer. Interaction with tetrameric potassium channel alpha subunits gives rise to a heterooctamer.

The protein localises to the cytoplasm. Its subcellular location is the membrane. It is found in the cell membrane. The enzyme catalyses a primary alcohol + NADP(+) = an aldehyde + NADPH + H(+). It catalyses the reaction a secondary alcohol + NADP(+) = a ketone + NADPH + H(+). In terms of biological role, regulatory subunit of the voltage-gated potassium (Kv) channels composed of pore-forming and potassium-conducting alpha subunits and of regulatory beta subunits. The beta-1/KCNAB1 cytoplasmic subunit mediates closure of delayed rectifier potassium channels by physically obstructing the pore via its N-terminal domain and increases the speed of channel closure for other family members. Promotes the inactivation of KCNA1, KCNA2, KCNA4, KCNA5 and KCNA6 alpha subunit-containing channels. Displays nicotinamide adenine dinucleotide phosphate (NADPH)-dependent aldoketoreductase activity by catalyzing the NADPH-dependent reduction of a variety of endogenous aldehydes and ketones. The binding of NADPH is required for efficient down-regulation of potassium channel activity. Oxidation of the bound NADPH restrains N-terminal domain from blocking the channel, thereby decreasing N-type inactivation of potassium channel activity. This is Voltage-gated potassium channel subunit beta-1 (KCNAB1) from Gallus gallus (Chicken).